Reading from the N-terminus, the 250-residue chain is Triosephosphate isomerase (250 aa).

9–11 (NWK) contributes to the substrate binding site. The active-site Electrophile is the His-95. Glu-167 acts as the Proton acceptor in catalysis. Substrate is bound by residues Gly-173, Ser-212, and 233-234 (GG).

Belongs to the triosephosphate isomerase family. As to quaternary structure, homodimer.

The protein localises to the cytoplasm. It catalyses the reaction D-glyceraldehyde 3-phosphate = dihydroxyacetone phosphate. Its pathway is carbohydrate biosynthesis; gluconeogenesis. It participates in carbohydrate degradation; glycolysis; D-glyceraldehyde 3-phosphate from glycerone phosphate: step 1/1. Functionally, involved in the gluconeogenesis. Catalyzes stereospecifically the conversion of dihydroxyacetone phosphate (DHAP) to D-glyceraldehyde-3-phosphate (G3P). This chain is Triosephosphate isomerase, found in Psychromonas ingrahamii (strain DSM 17664 / CCUG 51855 / 37).